A 201-amino-acid chain; its full sequence is Adenylyl-sulfate kinase (201 aa).

Gly-35–Ser-42 provides a ligand contact to ATP. Ser-109 (phosphoserine intermediate) is an active-site residue.

This sequence belongs to the APS kinase family.

It catalyses the reaction adenosine 5'-phosphosulfate + ATP = 3'-phosphoadenylyl sulfate + ADP + H(+). It participates in sulfur metabolism; hydrogen sulfide biosynthesis; sulfite from sulfate: step 2/3. Functionally, catalyzes the synthesis of activated sulfate. In Prochlorococcus marinus (strain SARG / CCMP1375 / SS120), this protein is Adenylyl-sulfate kinase.